Here is a 133-residue protein sequence, read N- to C-terminus: MSSNSVVYWGTGRRKTSVARVRLVPGNGTITINGRPGDNYLNYNPAYIAAVKAPLETLGLGTEYDILVNVHGGGLTGQSGAIKQGAARALCELSADNRKPLKTEGHLSRDPRAKERRKYGLKKARKAPQFSKR.

Basic and acidic residues predominate over residues Arg98 to Ala113. Residues Arg98–Arg133 form a disordered region. Basic residues predominate over residues Lys114–Arg133.

This sequence belongs to the universal ribosomal protein uS9 family.

This is Small ribosomal subunit protein uS9 from Parasynechococcus marenigrum (strain WH8102).